The chain runs to 804 residues: Leucine--tRNA ligase (804 aa).

The short motif at 40 to 51 (PYPSGAGLHVGH) is the 'HIGH' region element. The 'KMSKS' region motif lies at 576-580 (KMSKS). An ATP-binding site is contributed by lysine 579.

It belongs to the class-I aminoacyl-tRNA synthetase family.

It is found in the cytoplasm. The catalysed reaction is tRNA(Leu) + L-leucine + ATP = L-leucyl-tRNA(Leu) + AMP + diphosphate. This is Leucine--tRNA ligase from Staphylococcus haemolyticus (strain JCSC1435).